A 212-amino-acid polypeptide reads, in one-letter code: Pyridoxine/pyridoxamine 5'-phosphate oxidase (212 aa).

Substrate contacts are provided by residues 7–10 (RREY) and Lys65. FMN contacts are provided by residues 60–65 (RIVLLK), 75–76 (FT), Arg81, Lys82, and Gln104. 3 residues coordinate substrate: Tyr122, Arg126, and Ser130. FMN-binding positions include 139–140 (QS) and Trp184. Position 190-192 (190-192 (RLH)) interacts with substrate. Arg194 serves as a coordination point for FMN.

It belongs to the pyridoxamine 5'-phosphate oxidase family. Homodimer. Requires FMN as cofactor.

The catalysed reaction is pyridoxamine 5'-phosphate + O2 + H2O = pyridoxal 5'-phosphate + H2O2 + NH4(+). The enzyme catalyses pyridoxine 5'-phosphate + O2 = pyridoxal 5'-phosphate + H2O2. It participates in cofactor metabolism; pyridoxal 5'-phosphate salvage; pyridoxal 5'-phosphate from pyridoxamine 5'-phosphate: step 1/1. Its pathway is cofactor metabolism; pyridoxal 5'-phosphate salvage; pyridoxal 5'-phosphate from pyridoxine 5'-phosphate: step 1/1. Functionally, catalyzes the oxidation of either pyridoxine 5'-phosphate (PNP) or pyridoxamine 5'-phosphate (PMP) into pyridoxal 5'-phosphate (PLP). This chain is Pyridoxine/pyridoxamine 5'-phosphate oxidase, found in Pseudoalteromonas translucida (strain TAC 125).